Here is a 2999-residue protein sequence, read N- to C-terminus: TPR and ankyrin repeat-containing protein 1 (2999 aa).

Positions 1 to 87 (MASTTAGRRW…QPRGSTDSAC (87 aa)) are disordered. The span at 19–36 (RGPTPRSRAPGAKLSAPE) shows a compositional bias: low complexity. TPR repeat units follow at residues 144-177 (AMLL…DPTY) and 179-211 (KGYY…LQRS). ANK repeat units follow at residues 297–327 (EKYV…NIET), 328–361 (IGPN…EWKE), 369–405 (AGCT…DPTL), 538–567 (SQDR…DPRS), 572–593 (EGDT…DIGF), and 621–654 (NGNT…NFNL). Disordered stretches follow at residues 684–722 (RRKN…LPCG), 773–831 (MPLP…GASQ), 1151–1211 (LEVE…GCVP), and 1318–1344 (WEED…QTGD). Polar residues-rich tracts occupy residues 699–717 (SRSS…TSFK) and 801–815 (TQRM…NNPV). Over residues 1151 to 1164 (LEVEPGKEGPGREE) the composition is skewed to basic and acidic residues. Positions 1318-1327 (WEEDDEEVEA) are enriched in acidic residues. 2 TPR repeats span residues 1772–1805 (PYEW…EKEK) and 1866–1899 (LGKI…DLAL).

In terms of tissue distribution, expressed only in the brain. Detected in the hippocampus, hypothalamus and cingulate gyrus.

The protein is TPR and ankyrin repeat-containing protein 1 (Trank1) of Mus musculus (Mouse).